A 411-amino-acid polypeptide reads, in one-letter code: Dual-specificity RNA methyltransferase RlmN (411 aa).

The active-site Proton acceptor is Glu-125. The Radical SAM core domain occupies 131–380; sequence EEGRGTLCIS…IRTPRGRDIL (250 aa). Residues Cys-138 and Cys-383 are joined by a disulfide bond. Positions 145, 149, and 152 each coordinate [4Fe-4S] cluster. Residues 209-210, Ser-241, 263-265, and Asn-340 contribute to the S-adenosyl-L-methionine site; these read GE and SLH. The S-methylcysteine intermediate role is filled by Cys-383.

The protein belongs to the radical SAM superfamily. RlmN family. Requires [4Fe-4S] cluster as cofactor.

The protein localises to the cytoplasm. The enzyme catalyses adenosine(2503) in 23S rRNA + 2 reduced [2Fe-2S]-[ferredoxin] + 2 S-adenosyl-L-methionine = 2-methyladenosine(2503) in 23S rRNA + 5'-deoxyadenosine + L-methionine + 2 oxidized [2Fe-2S]-[ferredoxin] + S-adenosyl-L-homocysteine. It catalyses the reaction adenosine(37) in tRNA + 2 reduced [2Fe-2S]-[ferredoxin] + 2 S-adenosyl-L-methionine = 2-methyladenosine(37) in tRNA + 5'-deoxyadenosine + L-methionine + 2 oxidized [2Fe-2S]-[ferredoxin] + S-adenosyl-L-homocysteine. In terms of biological role, specifically methylates position 2 of adenine 2503 in 23S rRNA and position 2 of adenine 37 in tRNAs. m2A2503 modification seems to play a crucial role in the proofreading step occurring at the peptidyl transferase center and thus would serve to optimize ribosomal fidelity. The polypeptide is Dual-specificity RNA methyltransferase RlmN (Brucella suis biovar 1 (strain 1330)).